The following is a 446-amino-acid chain: Phosphoglucosamine mutase (446 aa).

Catalysis depends on Ser-101, which acts as the Phosphoserine intermediate. 4 residues coordinate Mg(2+): Ser-101, Asp-240, Asp-242, and Asp-244. At Ser-101 the chain carries Phosphoserine.

This sequence belongs to the phosphohexose mutase family. It depends on Mg(2+) as a cofactor. Post-translationally, activated by phosphorylation.

The catalysed reaction is alpha-D-glucosamine 1-phosphate = D-glucosamine 6-phosphate. Catalyzes the conversion of glucosamine-6-phosphate to glucosamine-1-phosphate. This is Phosphoglucosamine mutase from Pseudomonas putida (strain W619).